The sequence spans 254 residues: tRNA (guanine-N(1)-)-methyltransferase (254 aa).

Residues G119 and 139 to 144 contribute to the S-adenosyl-L-methionine site; that span reads IGDFVL.

This sequence belongs to the RNA methyltransferase TrmD family. Homodimer.

The protein resides in the cytoplasm. It catalyses the reaction guanosine(37) in tRNA + S-adenosyl-L-methionine = N(1)-methylguanosine(37) in tRNA + S-adenosyl-L-homocysteine + H(+). In terms of biological role, specifically methylates guanosine-37 in various tRNAs. The protein is tRNA (guanine-N(1)-)-methyltransferase of Dechloromonas aromatica (strain RCB).